Reading from the N-terminus, the 330-residue chain is Glucan endo-1,3-beta-glucosidase GIII (330 aa).

The N-terminal stretch at 1–25 (MARKGVDVAVALVLVALAAFPAVHS) is a signal peptide. Catalysis depends on Glu-117, which acts as the Proton donor. The active-site Nucleophile is Glu-255.

Belongs to the glycosyl hydrolase 17 family.

The catalysed reaction is Hydrolysis of (1-&gt;3)-beta-D-glucosidic linkages in (1-&gt;3)-beta-D-glucans.. Its function is as follows. May provide a degree of protection against microbial invasion of germinated barley grain through its ability to degrade fungal cell wall polysaccharides. This Hordeum vulgare (Barley) protein is Glucan endo-1,3-beta-glucosidase GIII.